The primary structure comprises 614 residues: Sodium- and chloride-dependent betaine transporter (614 aa).

The Cytoplasmic segment spans residues Met-1–Glu-44. A run of 3 helical transmembrane segments spans residues Phe-45–Leu-65, Ala-73–Leu-92, and Gly-117–Leu-137. The Extracellular segment spans residues Ala-138 to Arg-210. 2 N-linked (GlcNAc...) asparagine glycosylation sites follow: Asn-171 and Asn-183. Transmembrane regions (helical) follow at residues Trp-211 to Trp-229, Val-238 to Ile-255, Ile-291 to Tyr-308, Ile-320 to Leu-341, Met-374 to Leu-393, Leu-423 to Thr-441, Gly-458 to Ala-478, Ile-499 to Ser-518, and Ile-538 to Ile-556. The Cytoplasmic portion of the chain corresponds to Thr-557 to Leu-614. The segment at Thr-574–Pro-600 is disordered. Ser-586 carries the post-translational modification Phosphoserine. Residues Gln-588–Pro-600 show a composition bias toward polar residues.

It belongs to the sodium:neurotransmitter symporter (SNF) (TC 2.A.22) family. SLC6A12 subfamily. Interacts with LIN7C.

It is found in the basolateral cell membrane. The protein resides in the cell membrane. It catalyses the reaction 4-aminobutanoate(out) + chloride(out) + 3 Na(+)(out) = 4-aminobutanoate(in) + chloride(in) + 3 Na(+)(in). It carries out the reaction glycine betaine(out) + 2 chloride(out) + 3 Na(+)(out) = glycine betaine(in) + 2 chloride(in) + 3 Na(+)(in). Its function is as follows. Transporter that mediates cellular uptake of betaine and GABA in a sodium- and chloride-dependent process. May have a role in regulation of GABAergic transmission in the brain through the reuptake of GABA into presynaptic terminals, as well as in osmotic regulation. Probably also involved in renal and hepatic osmotic regulation. In Rattus norvegicus (Rat), this protein is Sodium- and chloride-dependent betaine transporter (Slc6a12).